The chain runs to 236 residues: C-&gt;U-editing enzyme APOBEC-1 (236 aa).

The region spanning 10–134 (GDPTLRRRIE…QRNRQGLRDL (125 aa)) is the CMP/dCMP-type deaminase domain. Residue His61 coordinates Zn(2+). Glu63 acts as the Proton donor in catalysis. Cys93 and Cys96 together coordinate Zn(2+).

This sequence belongs to the cytidine and deoxycytidylate deaminase family. In terms of assembly, homodimer. Interacts with A1CF; form an mRNA editing complex. Interacts with RBM47; form an mRNA editing complex. Found in a complex with CELF2/CUGBP2 and A1CF. Interacts with HNRPAB. Interacts with SYNCRIP. Zn(2+) is required as a cofactor.

The protein resides in the cytoplasm. It localises to the nucleus. The enzyme catalyses a cytidine in mRNA + H2O + H(+) = a uridine in mRNA + NH4(+). The catalysed reaction is cytidine(6666) in apoB mRNA + H2O + H(+) = uridine(6666) in apoB mRNA + NH4(+). Its function is as follows. Cytidine deaminase catalyzing the cytidine to uridine postranscriptional editing of a variety of mRNAs. Form complexes with cofactors that confer differential editing activity and selectivity. Responsible for the postranscriptional editing of a CAA codon for Gln to a UAA codon for stop in the apolipoprotein B mRNA. Also involved in CGA (Arg) to UGA (Stop) editing in the NF1 mRNA. May also play a role in the epigenetic regulation of gene expression by participating in DNA demethylation. This is C-&gt;U-editing enzyme APOBEC-1 from Pongo pygmaeus (Bornean orangutan).